The sequence spans 355 residues: 3-dehydroquinate synthase (355 aa).

NAD(+) contacts are provided by residues 105 to 109 (GVVGD), 129 to 130 (TS), K142, K151, and 169 to 172 (TLKT). Residues E184, H246, and H263 each contribute to the Zn(2+) site.

The protein belongs to the sugar phosphate cyclases superfamily. Dehydroquinate synthase family. NAD(+) serves as cofactor. Co(2+) is required as a cofactor. Requires Zn(2+) as cofactor.

Its subcellular location is the cytoplasm. It carries out the reaction 7-phospho-2-dehydro-3-deoxy-D-arabino-heptonate = 3-dehydroquinate + phosphate. It participates in metabolic intermediate biosynthesis; chorismate biosynthesis; chorismate from D-erythrose 4-phosphate and phosphoenolpyruvate: step 2/7. Its function is as follows. Catalyzes the conversion of 3-deoxy-D-arabino-heptulosonate 7-phosphate (DAHP) to dehydroquinate (DHQ). This chain is 3-dehydroquinate synthase, found in Streptococcus agalactiae serotype V (strain ATCC BAA-611 / 2603 V/R).